Consider the following 234-residue polypeptide: Methylamine utilization ferredoxin-type protein MauM (234 aa).

4Fe-4S ferredoxin-type domains are found at residues 61 to 91 (ALAEKDFQSACVRCGLCVEDCPFDILKLASW), 98 to 131 (GTPFFTARDEPCRMCQDIPCVRACPTGALNPLLT), 140 to 176 (VAVLVDHETCLNYKGLNCSICVRVCPIRGEAISLKPI), and 184 to 215 (QIPTVDSTKCTGCGTCEKHCVLSEAAIRVLPR). Cys71, Cys74, Cys77, Cys81, Cys109, Cys112, Cys117, Cys121, Cys149, Cys157, Cys160, Cys164, Cys193, Cys196, Cys199, and Cys203 together coordinate [4Fe-4S] cluster.

It functions in the pathway one-carbon metabolism; methylamine degradation. In terms of biological role, involved in electron transfer. This Methylobacillus flagellatus (strain ATCC 51484 / DSM 6875 / VKM B-1610 / KT) protein is Methylamine utilization ferredoxin-type protein MauM (mauM).